Here is an 806-residue protein sequence, read N- to C-terminus: DNA topoisomerase 1 (806 aa).

Positions 1-15 (MSVVSNHHSNGNGNS) are enriched in low complexity. The segment at 1–236 (MSVVSNHHSN…KKEPPKKKVK (236 aa)) is disordered. Positions 24 to 34 (DEIKKEVKDEP) are enriched in basic and acidic residues. 2 stretches are compositionally biased toward basic residues: residues 49-60 (RDKKEKKQKKRK) and 98-108 (EKKKSKKNNKK). Residues 113–127 (SSEDDDEESEGDVSE) are compositionally biased toward acidic residues. Residues 128–137 (EDVKPQIHSD) show a composition bias toward basic and acidic residues. The segment covering 138 to 153 (DELEEEDEAPTTDDEE) has biased composition (acidic residues). Over residues 159-176 (EKERRKKEKREKKERKEK) the composition is skewed to basic residues. Over residues 177–188 (KRLEKENRKIKE) the composition is skewed to basic and acidic residues. Residues 189–199 (EDDEDSDDEDD) are compositionally biased toward acidic residues. The span at 210 to 229 (KGAEKSKPSTSKKDAGGKKE) shows a compositional bias: basic and acidic residues. 3 interaction with DNA regions span residues 467 to 468 (KY), 530 to 535 (RAGNEK), and 634 to 636 (TVK). Positions 474 to 803 (SSKIKGEKDF…IDMTNSSDEE (330 aa)) constitute a Topo IB-type catalytic domain. The O-(3'-phospho-DNA)-tyrosine intermediate role is filled by Tyr-761.

The protein belongs to the type IB topoisomerase family. Expressed in male germ cells and in mature sperm.

It localises to the nucleus. It is found in the nucleolus. The protein localises to the chromosome. It carries out the reaction ATP-independent breakage of single-stranded DNA, followed by passage and rejoining.. Functionally, releases the supercoiling and torsional tension of DNA introduced during the DNA replication and transcription by transiently cleaving and rejoining one strand of the DNA duplex. Introduces a single-strand break via transesterification at a target site in duplex DNA. The scissile phosphodiester is attacked by the catalytic tyrosine of the enzyme, resulting in the formation of a DNA-(3'-phosphotyrosyl)-enzyme intermediate and the expulsion of a 5'-OH DNA strand. The free DNA strand then rotates around the intact phosphodiester bond on the opposing strand, thus removing DNA supercoils. Finally, in the religation step, the DNA 5'-OH attacks the covalent intermediate to expel the active-site tyrosine and restore the DNA phosphodiester backbone. Required for normal spermatogenesis and oogenesis. The protein is DNA topoisomerase 1 (top-1) of Caenorhabditis elegans.